We begin with the raw amino-acid sequence, 218 residues long: Octanoyltransferase (218 aa).

The BPL/LPL catalytic domain occupies 30 to 217 (GEAGELVWLV…SFARNFPPLA (188 aa)). Residues 68–75 (RGGQYTYH), 148–150 (AIG), and 161–163 (GIA) contribute to the substrate site. The active-site Acyl-thioester intermediate is the cysteine 179.

It belongs to the LipB family.

The protein localises to the cytoplasm. The enzyme catalyses octanoyl-[ACP] + L-lysyl-[protein] = N(6)-octanoyl-L-lysyl-[protein] + holo-[ACP] + H(+). The protein operates within protein modification; protein lipoylation via endogenous pathway; protein N(6)-(lipoyl)lysine from octanoyl-[acyl-carrier-protein]: step 1/2. In terms of biological role, catalyzes the transfer of endogenously produced octanoic acid from octanoyl-acyl-carrier-protein onto the lipoyl domains of lipoate-dependent enzymes. Lipoyl-ACP can also act as a substrate although octanoyl-ACP is likely to be the physiological substrate. In Paracoccus denitrificans (strain Pd 1222), this protein is Octanoyltransferase.